The chain runs to 286 residues: Phosphatidylglycerol--prolipoprotein diacylglyceryl transferase (286 aa).

7 helical membrane passes run 29–49 (IHWY…VGTY), 66–86 (LVFY…VFFY), 101–121 (VWEG…AMML), 130–150 (FLDL…LGRI), 181–201 (PSQL…LFWF), 209–229 (AAVA…VEFV), and 250–270 (LSLP…RHPA). Arg149 contacts a 1,2-diacyl-sn-glycero-3-phospho-(1'-sn-glycerol).

It belongs to the Lgt family.

The protein localises to the cell inner membrane. The catalysed reaction is L-cysteinyl-[prolipoprotein] + a 1,2-diacyl-sn-glycero-3-phospho-(1'-sn-glycerol) = an S-1,2-diacyl-sn-glyceryl-L-cysteinyl-[prolipoprotein] + sn-glycerol 1-phosphate + H(+). Its pathway is protein modification; lipoprotein biosynthesis (diacylglyceryl transfer). In terms of biological role, catalyzes the transfer of the diacylglyceryl group from phosphatidylglycerol to the sulfhydryl group of the N-terminal cysteine of a prolipoprotein, the first step in the formation of mature lipoproteins. This chain is Phosphatidylglycerol--prolipoprotein diacylglyceryl transferase, found in Teredinibacter turnerae (strain ATCC 39867 / T7901).